Consider the following 208-residue polypeptide: Outer-membrane lipoprotein carrier protein (208 aa).

Residues 1–22 (MRKTLTALMLSLPLLTPHMAFA) form the signal peptide.

It belongs to the LolA family. Monomer.

It localises to the periplasm. Participates in the translocation of lipoproteins from the inner membrane to the outer membrane. Only forms a complex with a lipoprotein if the residue after the N-terminal Cys is not an aspartate (The Asp acts as a targeting signal to indicate that the lipoprotein should stay in the inner membrane). This Shewanella woodyi (strain ATCC 51908 / MS32) protein is Outer-membrane lipoprotein carrier protein.